Reading from the N-terminus, the 314-residue chain is tRNA dimethylallyltransferase (314 aa).

Residue glycine 14–threonine 21 coordinates ATP. Substrate is bound at residue threonine 16 to threonine 21. Interaction with substrate tRNA regions lie at residues aspartate 39 to glutamine 42, glutamine 163 to arginine 167, and arginine 245 to arginine 250.

This sequence belongs to the IPP transferase family. In terms of assembly, monomer. The cofactor is Mg(2+).

It catalyses the reaction adenosine(37) in tRNA + dimethylallyl diphosphate = N(6)-dimethylallyladenosine(37) in tRNA + diphosphate. In terms of biological role, catalyzes the transfer of a dimethylallyl group onto the adenine at position 37 in tRNAs that read codons beginning with uridine, leading to the formation of N6-(dimethylallyl)adenosine (i(6)A). The protein is tRNA dimethylallyltransferase of Dechloromonas aromatica (strain RCB).